The chain runs to 365 residues: uncharacterized protein (365 aa).

The protein belongs to the mycobacterial PPE family.

This is an uncharacterized protein from Mycobacterium tuberculosis (strain ATCC 25618 / H37Rv).